The following is a 572-amino-acid chain: O-fucosyltransferase 16 (572 aa).

Residues 17–37 traverse the membrane as a helical; Signal-anchor for type II membrane protein segment; that stretch reads LLPLVIAVSLSLLILFAFLSF. 2 N-linked (GlcNAc...) asparagine glycosylation sites follow: Asn-92 and Asn-136. A substrate-binding site is contributed by 274-276; sequence HLR. Residues Asn-446 and Asn-506 are each glycosylated (N-linked (GlcNAc...) asparagine). The interval 498-572 is disordered; sequence ESRKLGKKNK…EPELEAMLSD (75 aa). Acidic residues predominate over residues 521-541; that stretch reads DQTEEDDPDWSEPDYEEEQSD. N-linked (GlcNAc...) asparagine glycosylation occurs at Asn-549. The segment covering 554–566 has biased composition (acidic residues); sequence DYDDPSTSDEPEL.

This sequence belongs to the glycosyltransferase GT106 family.

It is found in the membrane. Its pathway is glycan metabolism. This chain is O-fucosyltransferase 16, found in Arabidopsis thaliana (Mouse-ear cress).